The chain runs to 131 residues: Large ribosomal subunit protein bL17 (131 aa).

It belongs to the bacterial ribosomal protein bL17 family. In terms of assembly, part of the 50S ribosomal subunit. Contacts protein L32.

The polypeptide is Large ribosomal subunit protein bL17 (Thermotoga neapolitana (strain ATCC 49049 / DSM 4359 / NBRC 107923 / NS-E)).